The primary structure comprises 449 residues: Lipase (449 aa).

A signal peptide spans 1–23 (MGVFDYKNLGTEASKTLFADATA). The interval 58 to 77 (RQHRLPGSDPPAFPGILTRK) is disordered. Residue S206 is the Charge relay system of the active site. Ca(2+)-binding residues include G318, D387, and D396. 2 Hemolysin-type calcium-binding repeats span residues 372–389 (IGSDGNDLIQGGKGADFI) and 390–407 (EGGKGNDTIRDNSGHNTF).

The protein belongs to the AB hydrolase superfamily. Lipase family.

It carries out the reaction a triacylglycerol + H2O = a diacylglycerol + a fatty acid + H(+). In Pseudomonas fluorescens, this protein is Lipase.